Here is a 302-residue protein sequence, read N- to C-terminus: Phospho-N-acetylmuramoyl-pentapeptide-transferase (302 aa).

The next 10 membrane-spanning stretches (helical) occupy residues Met-1 to Arg-21, Gly-42 to Ser-62, Val-67 to Ile-87, Ala-101 to Val-121, Phe-123 to Val-143, Gly-154 to Leu-174, Gly-178 to Asn-198, Ile-204 to Leu-224, Phe-229 to Ile-249, and Ile-279 to Gly-299.

Belongs to the glycosyltransferase 4 family. MraY subfamily. Mg(2+) serves as cofactor.

Its subcellular location is the cell inner membrane. The enzyme catalyses UDP-N-acetyl-alpha-D-muramoyl-L-alanyl-gamma-D-glutamyl-meso-2,6-diaminopimeloyl-D-alanyl-D-alanine + di-trans,octa-cis-undecaprenyl phosphate = di-trans,octa-cis-undecaprenyl diphospho-N-acetyl-alpha-D-muramoyl-L-alanyl-D-glutamyl-meso-2,6-diaminopimeloyl-D-alanyl-D-alanine + UMP. It functions in the pathway cell wall biogenesis; peptidoglycan biosynthesis. Functionally, catalyzes the initial step of the lipid cycle reactions in the biosynthesis of the cell wall peptidoglycan: transfers peptidoglycan precursor phospho-MurNAc-pentapeptide from UDP-MurNAc-pentapeptide onto the lipid carrier undecaprenyl phosphate, yielding undecaprenyl-pyrophosphoryl-MurNAc-pentapeptide, known as lipid I. The sequence is that of Phospho-N-acetylmuramoyl-pentapeptide-transferase from Thermotoga neapolitana (strain ATCC 49049 / DSM 4359 / NBRC 107923 / NS-E).